A 2068-amino-acid chain; its full sequence is Lipoxygenase homology domain-containing protein 1 (2068 aa).

PLAT domains lie at 43–160, 172–287, 296–412, 425–540, 553–673, 684–803, 814–934, 970–1088, 1101–1226, 1255–1373, 1422–1540, 1553–1668, 1680–1798, 1811–1932, and 1949–2065; these read KVYE…RDLL, NKYE…RDIL, ITYI…RQLY, YPWS…REMT, ARYR…RELL, FRYH…VELY, VHYE…RELL, TTFS…RDLF, VPYE…RELV, VLYS…RLFY, IPYY…RVFD, VLYE…CEIC, TSYT…RDFA, TTYE…VFEV, and VKYE…RELF.

In terms of tissue distribution, expressed in the inner ear, specifically in hair cells. Higher expression is detected in the cochlea.

The protein localises to the cell projection. The protein resides in the stereocilium. Functionally, required for normal function of hair cells in the inner ear. This chain is Lipoxygenase homology domain-containing protein 1 (Loxhd1), found in Mus musculus (Mouse).